The following is a 130-amino-acid chain: Methylglyoxal synthase (130 aa).

Residues 1-130 (MSKPRIALIA…DLARTMQDVC (130 aa)) form the MGS-like domain. Residues H11, K15, 37 to 40 (TGTT), and 57 to 58 (SG) contribute to the substrate site. D63 acts as the Proton donor/acceptor in catalysis. H90 contacts substrate.

Belongs to the methylglyoxal synthase family.

It carries out the reaction dihydroxyacetone phosphate = methylglyoxal + phosphate. Catalyzes the formation of methylglyoxal from dihydroxyacetone phosphate. This is Methylglyoxal synthase from Burkholderia multivorans (strain ATCC 17616 / 249).